The following is a 990-amino-acid chain: Insulin-degrading enzyme (990 aa).

His-81 serves as a coordination point for Zn(2+). Glu-84 acts as the Proton acceptor in catalysis. Residues His-85 and Glu-162 each contribute to the Zn(2+) site.

The protein belongs to the peptidase M16 family. The cofactor is Zn(2+).

It catalyses the reaction Degradation of insulin, glucagon and other polypeptides. No action on proteins.. Functionally, can cleave insulin and TGF-alpha. The polypeptide is Insulin-degrading enzyme (Ide) (Drosophila melanogaster (Fruit fly)).